The primary structure comprises 66 residues: ATP synthase protein 8 (66 aa).

Residues 8–24 (PWPMVIMSMILTLFYIT) traverse the membrane as a helical segment. K54 bears the N6-acetyllysine; alternate mark. Position 54 is an N6-succinyllysine; alternate (K54). Position 57 is an N6-acetyllysine (K57).

The protein belongs to the ATPase protein 8 family. As to quaternary structure, F-type ATPases have 2 components, CF(1) - the catalytic core - and CF(0) - the membrane proton channel. Component of an ATP synthase complex composed of ATP5PB, ATP5MC1, ATP5F1E, ATP5PD, ATP5ME, ATP5PF, ATP5MF, MT-ATP6, MT-ATP8, ATP5F1A, ATP5F1B, ATP5F1D, ATP5F1C, ATP5PO, ATP5MG, ATP5MK and ATP5MJ. Interacts with PRICKLE3.

The protein localises to the mitochondrion membrane. Its function is as follows. Mitochondrial membrane ATP synthase (F(1)F(0) ATP synthase or Complex V) produces ATP from ADP in the presence of a proton gradient across the membrane which is generated by electron transport complexes of the respiratory chain. F-type ATPases consist of two structural domains, F(1) - containing the extramembraneous catalytic core and F(0) - containing the membrane proton channel, linked together by a central stalk and a peripheral stalk. During catalysis, ATP synthesis in the catalytic domain of F(1) is coupled via a rotary mechanism of the central stalk subunits to proton translocation. Part of the complex F(0) domain. Minor subunit located with subunit a in the membrane. The sequence is that of ATP synthase protein 8 (MT-ATP8) from Alouatta guariba (Brown howler monkey).